The primary structure comprises 249 residues: MALVEKIQLTDDFSVYANPAAKLEVEFIHKEIFIDKCYDVAPFPDDSFIVDAGGNIGMFTLYMKRKYPQSTILAFEPAPATFSTFQRNMELHNVSGVQAHQCGLGREDASLALTFYPQMPGNSTLYAEDKTNQMKSVDQNHPIAKLMQETHEVQVDVKRLSDFLGEVPNLKRVNLLKVDVEGAEMDVLRGLDDEHWDLIDNVVVELCDSKGDFATAKTLLESKGFAVAVERPDWAPPDLKMYMLIAKRN.

Belongs to the FkbM methyltransferase family.

The protein operates within secondary metabolite biosynthesis. Methyltransferase; part of the pathway that mediates the biosynthesis of tenellin-type 2-pyridones, iron-chelating compounds involved in iron stress tolerance, competition with the natural competitor fungus Metarhizium robertsii and insect hosts infection. Methylates pyridovericin-N-O-(beta-D-glucopyranoside) produced by the UDP-glucosyltransferase GT1 to yield pyridovericin-N-O-(4-O-methyl-beta-D-glucopyranoside) (PMGP). The pathway begins with the assembly of the polyketide-amino acid backbone by the hybrid PKS-NRPS tenS with the help of the enoyl reductase tenC. These enzymes catalyze the synthesis of the pyrrolidine-2-dione intermediates pretellinin A, 11-hydropretellenin A, 12-hydropretellenin A, 13-hydropretellenin A, 14-hydropretellenin A, 12-oxopretellenin A and prototellinin D. The cytochrome P450 monooxygenase tenA then catalyzes an oxidative ring expansion of pretenellin A and 14-hydropretellenin A to form the 2-pyridone core, leading to pretenellin B and pyridovericin, respectively. The cytochrome P450 monooxygenase tenB is then required for the selective N-hydroxylation of the 2-pyridone nitrogen of yield tellinin and 15-hydroxytellenin (15-HT), respectively. The UDP-glucosyltransferase GT1 and the methyltransferase MT1, located outside the tenS gene cluster, contribute to the stepwise glycosylation and methylation of 15-HT to obtain the glycoside pyridovericin-N-O-(4-O-methyl-beta-D-glucopyranoside) (PMGP). Additional related compounds such as 1-O-methyl-15-HT, (8Z)-1-O-methyl-15-HT, and O-methyltenellin A are also produced but the enzymes involved in their biosynthesis have still to be determined. The chain is Methyltransferase 1 from Beauveria bassiana (strain ARSEF 2860) (White muscardine disease fungus).